The sequence spans 220 residues: Sec-independent protein translocase protein TatB (220 aa).

Residues 1 to 21 (MFDIGFSELLLVLVIGLVVLG) traverse the membrane as a helical segment. The tract at residues 190–220 (VTKQQIDTIDSHGTDLSSAGPSRIHQPGGDQ) is disordered.

It belongs to the TatB family. In terms of assembly, the Tat system comprises two distinct complexes: a TatABC complex, containing multiple copies of TatA, TatB and TatC subunits, and a separate TatA complex, containing only TatA subunits. Substrates initially bind to the TatABC complex, which probably triggers association of the separate TatA complex to form the active translocon.

The protein localises to the cell inner membrane. Functionally, part of the twin-arginine translocation (Tat) system that transports large folded proteins containing a characteristic twin-arginine motif in their signal peptide across membranes. Together with TatC, TatB is part of a receptor directly interacting with Tat signal peptides. TatB may form an oligomeric binding site that transiently accommodates folded Tat precursor proteins before their translocation. The sequence is that of Sec-independent protein translocase protein TatB from Yersinia pseudotuberculosis serotype I (strain IP32953).